The sequence spans 138 residues: Small ribosomal subunit protein uS11c (138 aa).

Positions 1–22 are disordered; the sequence is MAKSIPKTGSRKNVRIGSRNQT.

The protein belongs to the universal ribosomal protein uS11 family. Part of the 30S ribosomal subunit.

Its subcellular location is the plastid. The protein resides in the chloroplast. In Phaseolus angularis (Azuki bean), this protein is Small ribosomal subunit protein uS11c.